The following is a 210-amino-acid chain: Cytochrome c oxidase subunit 2 (210 aa).

The Mitochondrial intermembrane segment spans residues 1–15 (MSFILTFWMIFLMDS). The chain crosses the membrane as a helical span at residues 16–36 (IIVLISFSIFLSVWICALIIA). The Mitochondrial matrix portion of the chain corresponds to 37-63 (TVLTVTKINNIYCTWDFISSKFIDTYW). Residues 64–84 (FVLGMMFILCLLLRLCLLLYF) form a helical membrane-spanning segment. Residues 85 to 210 (SCINFVSFDL…GFMPIVINFI (126 aa)) lie on the Mitochondrial intermembrane side of the membrane. Residues H157, C192, E194, C196, H200, and M203 each coordinate Cu cation. E194 is a Mg(2+) binding site.

The protein belongs to the cytochrome c oxidase subunit 2 family. Component of the cytochrome c oxidase (complex IV, CIV), a multisubunit enzyme composed of a catalytic core of 3 subunits and several supernumerary subunits. The complex exists as a monomer or a dimer and forms supercomplexes (SCs) in the inner mitochondrial membrane with ubiquinol-cytochrome c oxidoreductase (cytochrome b-c1 complex, complex III, CIII). Cu cation is required as a cofactor.

The protein resides in the mitochondrion inner membrane. It carries out the reaction 4 Fe(II)-[cytochrome c] + O2 + 8 H(+)(in) = 4 Fe(III)-[cytochrome c] + 2 H2O + 4 H(+)(out). Component of the cytochrome c oxidase, the last enzyme in the mitochondrial electron transport chain which drives oxidative phosphorylation. The respiratory chain contains 3 multisubunit complexes succinate dehydrogenase (complex II, CII), ubiquinol-cytochrome c oxidoreductase (cytochrome b-c1 complex, complex III, CIII) and cytochrome c oxidase (complex IV, CIV), that cooperate to transfer electrons derived from NADH and succinate to molecular oxygen, creating an electrochemical gradient over the inner membrane that drives transmembrane transport and the ATP synthase. Cytochrome c oxidase is the component of the respiratory chain that catalyzes the reduction of oxygen to water. Electrons originating from reduced cytochrome c in the intermembrane space (IMS) are transferred via the dinuclear copper A center (CU(A)) of subunit 2 and heme A of subunit 1 to the active site in subunit 1, a binuclear center (BNC) formed by heme A3 and copper B (CU(B)). The BNC reduces molecular oxygen to 2 water molecules using 4 electrons from cytochrome c in the IMS and 4 protons from the mitochondrial matrix. The polypeptide is Cytochrome c oxidase subunit 2 (COXII) (Trypanosoma brucei brucei).